The primary structure comprises 329 residues: Putative ubiquitin thioesterase otu1 (329 aa).

The segment at 7-89 is UBX-like; sequence RLKYENQSAV…ATSFSTNEPA (83 aa). The interval 85–127 is disordered; it reads TNEPAKPPIPNAATKPTFPPQTEISNPPAVSHQSKNTSQDPPY. The segment covering 115–124 has biased composition (polar residues); sequence SHQSKNTSQD. The OTU domain occupies 135 to 254; it reads IALRVMPDDN…GIHYDLAALA (120 aa). The tract at residues 140 to 146 is cys-loop; the sequence is MPDDNSC. The active site involves Asp143. The Nucleophile role is filled by Cys146. Positions 193-203 are variable-loop; it reads IRKETSWGGYI. A his-loop region spans residues 243-247; the sequence is YSGIH. Ile246 lines the substrate pocket. His247 is a catalytic residue. The S2 site stretch occupies residues 272–277; it reads VTITPY. Residues 299-323 form a C2H2-type zinc finger; sequence IRCTICGTGLVGEKDATAHALATGH. The active site involves His323.

It localises to the cytoplasm. It is found in the nucleus. It catalyses the reaction Thiol-dependent hydrolysis of ester, thioester, amide, peptide and isopeptide bonds formed by the C-terminal Gly of ubiquitin (a 76-residue protein attached to proteins as an intracellular targeting signal).. Hydrolase that can remove conjugated ubiquitin from proteins and may therefore play an important regulatory role at the level of protein turnover by preventing degradation. Has a role in meiosis. This is Putative ubiquitin thioesterase otu1 (otu1) from Schizosaccharomyces pombe (strain 972 / ATCC 24843) (Fission yeast).